A 571-amino-acid chain; its full sequence is E3 ubiquitin-protein ligase RNF168 (571 aa).

The RING-type zinc finger occupies 16-55 (CGICMEILVEPVTLPCNHTLCKPCFQSTVEKASLCCPFCR). S70 is modified (phosphoserine). The LR motif 1 signature appears at 110-128 (LSKPGELRREYEEEISKVA). Residue S134 is modified to Phosphoserine. Residues 143-151 (EEYIQRLLA) carry the UMI motif motif. Disordered regions lie at residues 151–174 (AEEE…QLKS) and 191–292 (EGSI…GADS). An MIU motif 1 motif is present at residues 168 to 191 (MEEQLKSDEELARKLSIDINNFCE). Position 197 is a phosphoserine (S197). Residues 202 to 214 (RKSDPVTPKSEKK) are compositionally biased toward basic and acidic residues. K210 is covalently cross-linked (Glycyl lysine isopeptide (Lys-Gly) (interchain with G-Cter in SUMO2)). Residues 231–242 (PKSQFGSASHSE) are compositionally biased toward polar residues. A compositionally biased stretch (basic and acidic residues) spans 243–263 (AVQEVRKDSVSKDIDSSDRKS). T362 bears the Phosphothreonine mark. Disordered regions lie at residues 390–422 (NQES…EETE) and 459–560 (KEQM…ISQK). A phosphoserine mark is found at S411, S414, and S415. An MIU motif 2 motif is present at residues 439 to 462 (RHKQEEQDRLLALQLQKEVDKEQM). An LR motif 2 motif is present at residues 466 to 477 (RQKGSPDEYHLR). A Phosphoserine modification is found at S470. The segment covering 508–519 (PTPERGSRDKNR) has biased composition (basic and acidic residues). Composition is skewed to polar residues over residues 520–530 (QVSLKMQLKQS) and 549–560 (SAHSLQPSISQK). K528 is covalently cross-linked (Glycyl lysine isopeptide (Lys-Gly) (interchain with G-Cter in SUMO2)).

It belongs to the RNF168 family. As to quaternary structure, monomer. Interacts with UBE2N/UBC13. In terms of processing, sumoylated with SUMO1 by PIAS4 in response to double-strand breaks (DSBs). Ubiquitinated.

It localises to the nucleus. The catalysed reaction is S-ubiquitinyl-[E2 ubiquitin-conjugating enzyme]-L-cysteine + [acceptor protein]-L-lysine = [E2 ubiquitin-conjugating enzyme]-L-cysteine + N(6)-ubiquitinyl-[acceptor protein]-L-lysine.. It participates in protein modification; protein ubiquitination. Its function is as follows. E3 ubiquitin-protein ligase required for accumulation of repair proteins to sites of DNA damage. Acts with UBE2N/UBC13 to amplify the RNF8-dependent histone ubiquitination. Recruited to sites of DNA damage at double-strand breaks (DSBs) by binding to ubiquitinated histone H2A and H2AX and amplifies the RNF8-dependent H2A ubiquitination, promoting the formation of 'Lys-63'-linked ubiquitin conjugates. This leads to concentrate ubiquitinated histones H2A and H2AX at DNA lesions to the threshold required for recruitment of TP53BP1 and BRCA1. Also recruited at DNA interstrand cross-links (ICLs) sites and promotes accumulation of 'Lys-63'-linked ubiquitination of histones H2A and H2AX, leading to recruitment of FAAP20/C1orf86 and Fanconi anemia (FA) complex, followed by interstrand cross-link repair. H2A ubiquitination also mediates the ATM-dependent transcriptional silencing at regions flanking DSBs in cis, a mechanism to avoid collision between transcription and repair intermediates. Also involved in class switch recombination in immune system, via its role in regulation of DSBs repair. Following DNA damage, promotes the ubiquitination and degradation of JMJD2A/KDM4A in collaboration with RNF8, leading to unmask H4K20me2 mark and promote the recruitment of TP53BP1 at DNA damage sites. Not able to initiate 'Lys-63'-linked ubiquitination in vitro; possibly due to partial occlusion of the UBE2N/UBC13-binding region. Catalyzes monoubiquitination of 'Lys-13' and 'Lys-15' of nucleosomal histone H2A (H2AK13Ub and H2AK15Ub, respectively). The sequence is that of E3 ubiquitin-protein ligase RNF168 from Homo sapiens (Human).